Here is a 299-residue protein sequence, read N- to C-terminus: Recombination-associated protein RdgC (299 aa).

It belongs to the RdgC family.

It localises to the cytoplasm. Its subcellular location is the nucleoid. Its function is as follows. May be involved in recombination. The sequence is that of Recombination-associated protein RdgC from Laribacter hongkongensis (strain HLHK9).